A 65-amino-acid polypeptide reads, in one-letter code: MSKMKTCKSAKKRYAFTSKGKIKYKKQNLRHILTKKSSKRRRKLGKSGLVSSFEVKRIKTLLPYA.

The protein belongs to the bacterial ribosomal protein bL35 family.

The protein is Large ribosomal subunit protein bL35 of Borrelia turicatae (strain 91E135).